Here is a 401-residue protein sequence, read N- to C-terminus: Argininosuccinate synthase (401 aa).

9 to 17 (AYSGGLDTS) is a binding site for ATP. An L-citrulline-binding site is contributed by Tyr86. ATP is bound at residue Gly116. Thr118, Asn122, and Asp123 together coordinate L-aspartate. An L-citrulline-binding site is contributed by Asn122. Residues Arg126, Ser174, Ser183, Glu259, and Tyr271 each coordinate L-citrulline.

It belongs to the argininosuccinate synthase family. Type 1 subfamily. In terms of assembly, homotetramer.

Its subcellular location is the cytoplasm. The catalysed reaction is L-citrulline + L-aspartate + ATP = 2-(N(omega)-L-arginino)succinate + AMP + diphosphate + H(+). It functions in the pathway amino-acid biosynthesis; L-arginine biosynthesis; L-arginine from L-ornithine and carbamoyl phosphate: step 2/3. This Bacillus thuringiensis (strain Al Hakam) protein is Argininosuccinate synthase.